The sequence spans 346 residues: uncharacterized protein (346 aa).

Belongs to the PhyH family.

Its subcellular location is the cytoplasm. This is an uncharacterized protein from Saccharomyces cerevisiae (strain ATCC 204508 / S288c) (Baker's yeast).